The chain runs to 172 residues: Single-stranded DNA-binding protein A (172 aa).

One can recognise an SSB domain in the interval 1–104; it reads MLNRVVLVGR…VQAESVQFLE (104 aa). A Phosphotyrosine modification is found at Y82. The interval 103–172 is disordered; that stretch reads LEPKNGGGSG…IDISDDDLPF (70 aa). Positions 107–131 are enriched in gly residues; sequence NGGGSGSGGYNEGNSGGGQYFGGGQ. The segment covering 132–149 has biased composition (low complexity); it reads NDNPFGGNQNNQRRNQGN. Positions 167 to 172 match the Important for interaction with partner proteins motif; sequence DDDLPF.

As to quaternary structure, homotetramer. Interacts with proteins involved in DNA metabolism such as PriA, RecQ, RecG, RecS, DnaE, RarA, RecJ, RecO, SbcC, RecD2 (formerly YrrC), XseA and Ung. Interacts with RecQ via its 10 C-terminal residues. Interacts with RecD2. Post-translationally, phosphorylated by YwqD, which increases ssDNA affinity; dephosphorylated by YwqE.

It localises to the cytoplasm. The protein localises to the nucleoid. In terms of biological role, plays an important role in DNA replication, recombination and repair. Binds to single-stranded (ss)DNA and to an array of partner proteins to recruit them to their sites of action during DNA metabolism. Associates with oriC, this requires DnaA. SsbA binding to ssDNA prevents DnaB and DnaD individually from binding to DNA. Has a 20-fold higher affinity for ssDNA than SsbB; SsbA and DprA activate the homologous DNA strand exchange function of RecA-ATP. Enhances the activity of 3'-5' DNA helicase RecQ. In Bacillus subtilis (strain 168), this protein is Single-stranded DNA-binding protein A (ssbA).